Consider the following 339-residue polypeptide: MFVDIYDQLYISYAAVVSTLGIIFNGFLLFLIFFKSPSCLTPYTVFLANTSITQLGYCICFLLTVPRVISINLRIVNIYLGFSQFLGHWWSYMIFTTMLHFAVNSFLSIMLSMVFRCISLKTLRFPTSGAFAMCILAYMIPLSMVVSIRGIEITSNFTINSKYTLWQLENLDKYRTVVGTTMAQLSTLWVACCVSILCIPIYSVMFWCRYRILRMLERPGYMFNTTTTLQIKRLVKALTVQSLIPVFTLFPASLIFLSTQFHVIETTKFGYIIISLLSLSPTIDPLVTIYYVQPYRKYIVDLLWSEERPMVSPFLSNNDPRFYRSRSNSVLMMRNTHFV.

7 consecutive transmembrane segments (helical) span residues 14–34, 45–65, 94–114, 128–148, 188–208, 237–257, and 269–289; these read AAVVSTLGIIFNGFLLFLIFF, VFLANTSITQLGYCICFLLTV, IFTTMLHFAVNSFLSIMLSMV, SGAFAMCILAYMIPLSMVVSI, LWVACCVSILCIPIYSVMFWC, ALTVQSLIPVFTLFPASLIFL, and FGYIIISLLSLSPTIDPLVTI.

It belongs to the nematode receptor-like protein srd family.

It is found in the membrane. The sequence is that of Serpentine receptor class delta-32 (srd-32) from Caenorhabditis elegans.